The chain runs to 156 residues: Ribosome maturation factor RimP (156 aa).

Belongs to the RimP family.

It is found in the cytoplasm. Its function is as follows. Required for maturation of 30S ribosomal subunits. This chain is Ribosome maturation factor RimP, found in Synechococcus sp. (strain JA-2-3B'a(2-13)) (Cyanobacteria bacterium Yellowstone B-Prime).